The sequence spans 621 residues: Lamin-C (621 aa).

Residues 1–47 (MSARRVTLNTRVSRASTSTPVGGASTSSRVGATSPTSPTRTSRQQEK) form a disordered region. The interval 1–47 (MSARRVTLNTRVSRASTSTPVGGASTSSRVGATSPTSPTRTSRQQEK) is head. A compositionally biased stretch (polar residues) spans 7-31 (TLNTRVSRASTSTPVGGASTSSRVG). Low complexity predominate over residues 33–42 (TSPTSPTRTS). A Phosphoserine modification is found at Ser34. The IF rod domain occupies 46-402 (EKEELQHLND…KLLCGEERRL (357 aa)). The segment at 47-85 (KEELQHLNDRLACYIDRMRNLENENSRLTQELNLAQDTV) is coil 1A. The linker 1 stretch occupies residues 86 to 95 (NRETSNLKAV). Positions 96 to 233 (YEKELAAARK…QVHTQELTET (138 aa)) are coil 1B. Positions 234-257 (RSRRQIEISEIDGRLSRQYEAKLQ) are linker 2. The segment at 258 to 403 (QSLQELRDQY…LLCGEERRLN (146 aa)) is coil 2. The tract at residues 404–458 (IESPGRPTTDSGISSNGSHLTASASSRSGRVTPSGRRSATPGISGSSAVKRRRTV) is disordered. A tail region spans residues 404 to 621 (IESPGRPTTD…GVRSLFSLLF (218 aa)). Residues Ser406 and Ser441 each carry the phosphoserine modification. The segment covering 409-450 (RPTTDSGISSNGSHLTASASSRSGRVTPSGRRSATPGISGSS) has biased composition (polar residues). At Thr443 the chain carries Phosphothreonine. Residues 453–458 (KRRRTV) carry the Nuclear localization signal motif. The LTD domain maps to 468–582 (SEYSVNAAAK…EDVASYDRVR (115 aa)). Positions 585 to 605 (VSSHTSRHRSSGTPSTGFTLG) are disordered.

Belongs to the intermediate filament family. As to quaternary structure, interacts with MAN1. As to expression, first detected from late stage 12 in the oenocytes, abdominal segments, hindgut and posterior spiracles, with expression increasing in stage 13 (at protein level). In stage 14, also becomes detectable in the foregut (at protein level). Stage 15 shows expression in the epidermis, dorsal longitudinal trunk, pharynx, esophagus and proventriculus, with the dorsal pharyngeal musculature showing expression in late stage 15 (at protein level). In stage 16 embryos, also detected in the exit glia with increasing expression in the somatic musculature (at protein level). Also detected in the visceral mesoderm but not in the midgut or central nervous system until the end of embryogenesis (at protein level). In third instar larvae, detectable at varying levels in all cell types (at protein level). Expressed in spermatocytes (at protein level).

It localises to the nucleus. The protein localises to the nucleus lamina. Functionally, lamins are components of the nuclear lamina, a fibrous layer on the nucleoplasmic side of the inner nuclear membrane, which is thought to provide a framework for the nuclear envelope and may also interact with chromatin. In spermatocytes, regulates cytokinesis during meiosis. This is Lamin-C (LamC) from Drosophila melanogaster (Fruit fly).